Consider the following 2603-residue polypeptide: Squalestatin tetraketide synthase (2603 aa).

One can recognise a Ketosynthase family 3 (KS3) domain in the interval 29 to 455 (TIPIAIIGMS…GANAHVILES (427 aa)). Active-site for beta-ketoacyl synthase activity residues include C202, H337, and H377. Positions 463-512 (IANGSGRSNGTGNGHNGANGTTNGHNGTNGTTNGHFDATQATNGHYGTDE) are disordered. Residues 469–479 (RSNGTGNGHNG) are compositionally biased toward gly residues. Residues 480–497 (ANGTTNGHNGTNGTTNGH) show a composition bias toward low complexity. A malonyl-CoA:ACP transacylase (MAT) domain region spans residues 608–931 (VFTGQGAQWF…PYISCLLRGQ (324 aa)). The N-terminal hotdog fold stretch occupies residues 1000–1138 (HDLLGSLIVG…GRITIEFDTS (139 aa)). Residues 1000-1314 (HDLLGSLIVG…NQSVGQMAPQ (315 aa)) form the PKS/mFAS DH domain. The segment at 1000–1314 (HDLLGSLIVG…NQSVGQMAPQ (315 aa)) is dehydratase (DH) domain. Catalysis depends on H1032, which acts as the Proton acceptor; for dehydratase activity. The tract at residues 1157–1314 (LMRSVDPSNL…NQSVGQMAPQ (158 aa)) is C-terminal hotdog fold. The Proton donor; for dehydratase activity role is filled by D1223. The tract at residues 1465-1665 (LYRYYTDAIK…GLDIELRDCD (201 aa)) is methyltransferase (CMet) domain. An enoyl reductase (ER) (ER) domain region spans residues 1892-2205 (GLIDTLQFSK…AGKHMGKIVI (314 aa)). The segment at 2228 to 2406 (ASYLIVGGLG…AVSIDLGMVQ (179 aa)) is ketoreductase (KR) domain. One can recognise a Carrier domain in the interval 2516 to 2593 (EAIDVVGRAI…ALATTVATKS (78 aa)). S2553 carries the O-(pantetheine 4'-phosphoryl)serine modification.

It functions in the pathway secondary metabolite biosynthesis. In terms of biological role, highly reducing polyketide synthase (HR-PKS); part of the gene cluster that mediates the biosynthesis of squalestatin S1 (SQS1, also known as zaragozic acid A), a lead compound for the treatment of hyper-cholesterolemia by targeting squalene synthase (SS). Pks1 is responsible for the biosynthesis of the tetraketide sidechain of SQS1. The biosynthesis must involve 3 rounds of chain extension. After the first and second rounds methyl-transfer occurs, and in all rounds of extension the ketoreductase and dehydratase are active. The enoyl reductase and C-MeT are not active in the final round of extension. The chain is Squalestatin tetraketide synthase from Phoma sp. (strain C2932).